The chain runs to 45 residues: AAGQLSLTQLESLREVCELNLACEHMMDTEGIIAAYTAYYGPIPY.

In terms of domain architecture, Gla spans 1-41; that stretch reads AAGQLSLTQLESLREVCELNLACEHMMDTEGIIAAYTAYYG. Glu-11, Glu-15, Glu-18, and Glu-24 together coordinate Ca(2+). 4-carboxyglutamate is present on residues Glu-11, Glu-15, and Glu-18. Cys-17 and Cys-23 are oxidised to a cystine.

The protein belongs to the osteocalcin/matrix Gla protein family. Gamma-carboxyglutamate residues are formed by vitamin K dependent carboxylation by GGCX. These residues are essential for the binding of calcium.

It is found in the secreted. Its function is as follows. The carboxylated form is one of the main organic components of the bone matrix, which constitutes 1-2% of the total bone protein. The carboxylated form binds strongly to apatite and calcium. The chain is Osteocalcin 1 from Diplodus sargus (White seabream).